The following is a 393-amino-acid chain: Sulfite oxidase (393 aa).

The interval 1-27 is disordered; that stretch reads MPGIRGPSEYSQEPPRHPSLKVNAKEP. The tract at residues 10–242 is moco domain; it reads YSQEPPRHPS…QGFFMQKDYK (233 aa). Residues 49-53, C98, 159-161, H202, R207, and 218-220 contribute to the Mo-molybdopterin site; these read YKRNH, SVD, and SVK. The tract at residues 243–393 is homodimerization; that stretch reads MFPPSVNWDN…VLLRLGHSNL (151 aa). The Microbody targeting signal signature appears at 391–393; the sequence is SNL.

Predominantly monomer; also homodimer. Requires Mo-molybdopterin as cofactor.

The protein localises to the peroxisome. It catalyses the reaction sulfite + O2 + H2O = sulfate + H2O2. It functions in the pathway energy metabolism; sulfur metabolism. Its function is as follows. Probably involved in sulfite oxidative detoxification. This Arabidopsis thaliana (Mouse-ear cress) protein is Sulfite oxidase (SOX).